A 54-amino-acid chain; its full sequence is Photosystem II reaction center protein K (54 aa).

Residues 1-17 (MFQISLDMISNKINLLG) constitute a propeptide that is removed on maturation. The helical transmembrane segment at 29–49 (IVDVLPIIPILFFLLAFVWQA) threads the bilayer.

It belongs to the PsbK family. In terms of assembly, PSII is composed of 1 copy each of membrane proteins PsbA, PsbB, PsbC, PsbD, PsbE, PsbF, PsbH, PsbI, PsbJ, PsbK, PsbL, PsbM, PsbT, PsbY, PsbZ, Psb30/Ycf12, at least 3 peripheral proteins of the oxygen-evolving complex and a large number of cofactors. It forms dimeric complexes.

It is found in the plastid. It localises to the chloroplast thylakoid membrane. Its function is as follows. One of the components of the core complex of photosystem II (PSII). PSII is a light-driven water:plastoquinone oxidoreductase that uses light energy to abstract electrons from H(2)O, generating O(2) and a proton gradient subsequently used for ATP formation. It consists of a core antenna complex that captures photons, and an electron transfer chain that converts photonic excitation into a charge separation. The chain is Photosystem II reaction center protein K from Euglena stellata.